A 278-amino-acid chain; its full sequence is MHSQHRTARIALAVVLTAIPASLATAGVGYASTQASTAVKAGAGLDDPHKKEIAMELVSSAENSSLDWKAQYKYIEDIGDGRGYTGGIIGFCSGTGDMLELVQHYTDLEPGNILAKYLPALKKVNGSASHSGLGTPFTKDWATAAKDTVFQQAQNDERDRVYFDPAVSQAKADGLRALGQFAYYDAIVMHGPGNDPTSFGGIRKTAMKKARTPAQGGDETTYLNAFLDARKAAMLTEAAHDDTSRVDTEQRVFLKAGNLDLNPPLKWKTYGDPYVINS.

The first 40 residues, 1–40 (MHSQHRTARIALAVVLTAIPASLATAGVGYASTQASTAVK), serve as a signal peptide directing secretion. Glu-62 functions as the Proton donor in the catalytic mechanism. Asp-80 functions as the Nucleophile in the catalytic mechanism.

This sequence belongs to the glycosyl hydrolase 46 family.

The protein localises to the secreted. The enzyme catalyses Endohydrolysis of beta-(1-&gt;4)-linkages between D-glucosamine residues in a partly acetylated chitosan.. In terms of biological role, aids in the defense against invading fungal pathogens by degrading their cell wall chitosan. This chain is Chitosanase (csn), found in Streptomyces sp. (strain N174).